We begin with the raw amino-acid sequence, 222 residues long: V-type ATP synthase subunit D (222 aa).

This sequence belongs to the V-ATPase D subunit family.

Functionally, produces ATP from ADP in the presence of a proton gradient across the membrane. The chain is V-type ATP synthase subunit D from Acetivibrio thermocellus (strain ATCC 27405 / DSM 1237 / JCM 9322 / NBRC 103400 / NCIMB 10682 / NRRL B-4536 / VPI 7372) (Clostridium thermocellum).